Here is a 157-residue protein sequence, read N- to C-terminus: Anaerobic nitrite reductase Hb1 (157 aa).

Positions 5–154 constitute a Globin domain; it reads GFTEEQEALV…LAEAIKSEMK (150 aa). Positions 38 to 42 match the Homodimerization motif; that stretch reads EIAPA. Positions 48, 62, 66, 96, 100, and 101 each coordinate heme b. A Homodimerization motif is present at residues 108–120; it reads AEHFEVTKLALLE.

The protein belongs to the plant globin family. In terms of assembly, homodimer. The cofactor is heme b. Predominantly expressed in leaves, to a lower extent in roots, and barely in stems, flowers and seeds.

The protein resides in the cytoplasm. It is found in the nucleus. The catalysed reaction is Fe(III)-heme b-[protein] + nitric oxide + H2O = Fe(II)-heme b-[protein] + nitrite + 2 H(+). In terms of biological role, phytoglobin that reduces nitrite to nitric oxide (NO) under anoxic conditions (e.g. during flooding or in waterlogged soil) and upon root nodulation. Required for general plant development and during nodulation, especially for the onset of symbiosis. Monitors nitric oxide (NO) levels during early phase of the nitrogen-fixing symbiosis and buffers oxygen in functioning nodules. May not function as an oxygen storage or transport protein. Has an unusually high affinity for O(2) through a hexacoordinate heme iron because of a very low dissociation constant. Involved in water stress tolerance. The sequence is that of Anaerobic nitrite reductase Hb1 from Glycine max (Soybean).